The sequence spans 3411 residues: Genome polyprotein (3411 aa).

Topologically, residues 1 to 104 (MSGRKAQGKT…LSSRKRRSHD (104 aa)) are cytoplasmic. The interval 38–72 (PGPSRGVQGFIFFFLFNILTGKKITAHLKRLWKML) is hydrophobic; homodimerization of capsid protein C. The propeptide at 102–121 (SHDVLTVQFLILGMLLMTGG) is ER anchor for the capsid protein C, removed in mature form by serine protease NS3. Residues 105–125 (VLTVQFLILGMLLMTGGVTLV) form a helical membrane-spanning segment. The Extracellular portion of the chain corresponds to 126 to 244 (RKNRWLLLNV…GERQLQKIER (119 aa)). N-linked (GlcNAc...) asparagine; by host glycosylation is found at Asn134 and Asn150. Residues 245-265 (WFVRNPFFAVTALTIAYLVGS) traverse the membrane as a helical segment. Topologically, residues 266 to 270 (NMTQR) are cytoplasmic. Residues 271–285 (VVIALLVLAVGPAYS) traverse the membrane as a helical segment. The Extracellular portion of the chain corresponds to 286–730 (AHCIGITDRD…TVFGSAFQGL (445 aa)). 8 disulfide bridges follow: Cys288–Cys315, Cys345–Cys401, Cys345–Cys406, Cys359–Cys390, Cys377–Cys401, Cys377–Cys406, Cys467–Cys568, and Cys585–Cys615. Positions 383 to 396 (DRGWGNGCGLFGKG) are fusion peptide. A helical membrane pass occupies residues 731–751 (FGGLNWITKVIMGAVLIWVGI). Residues 752–757 (NTRNMT) lie on the Extracellular side of the membrane. The helical transmembrane segment at 758–778 (MSMSMILVGVIMMFLSLGVGA) threads the bilayer. The Extracellular portion of the chain corresponds to 779-1132 (DQGCAINFGK…LVRSWVTAGE (354 aa)). Disulfide bonds link Cys782-Cys793, Cys833-Cys921, Cys957-Cys1002, Cys1058-Cys1107, Cys1069-Cys1091, and Cys1090-Cys1094. N-linked (GlcNAc...) asparagine; by host glycans are attached at residues Asn908 and Asn986. The helical transmembrane segment at 1133 to 1153 (IHAVPFGLVSMMIAMEVVLRK) threads the bilayer. Residues 1154–1201 (RQGPKQMLVGGVVLLGAMLVGQVTLLDLLKLTVAVGLHFHEMNNGGDA) lie on the Cytoplasmic side of the membrane. Residues 1202-1222 (MYMALIAAFSIRPGLLIGFGL) form a helical membrane-spanning segment. Topologically, residues 1223–1287 (RTLWSPRERL…ILPLMALLTP (65 aa)) are lumenal. A helical membrane pass occupies residues 1288–1308 (VTMAEVRLAAMFFCAVVIIGV). The Cytoplasmic segment spans residues 1309–1355 (LHQNFKDTSMQKTIPLVALTLTSYLGLTQPFLGLCAFLATRIFGRRS). Residues 1356–1376 (IPVNEALAAAGLVGVLAGLAF) traverse the membrane as a helical segment. Topologically, residues 1377-1378 (QE) are lumenal. A helical membrane pass occupies residues 1379-1399 (MENFLGPIAVGGLLMMLVSVA). Over 1400–1456 (GRVDGLELKKLGEVSWEEEAEISGSSARYDVALSEQGEFKLLSEEKVPWDQVVMTSL) the chain is Cytoplasmic. The interval 1407-1446 (LKKLGEVSWEEEAEISGSSARYDVALSEQGEFKLLSEEKV) is interacts with and activates NS3 protease. The segment at residues 1457 to 1477 (ALVGAALHPFALLLVLAGWLF) is an intramembrane region (helical). Over 1478–2157 (HVRGARRSGD…RNALSMMPEA (680 aa)) the chain is Cytoplasmic. The Peptidase S7 domain occupies 1485–1665 (SGDVLWDIPT…EVKEEGKEEL (181 aa)). Active-site charge relay system; for serine protease NS3 activity residues include His1537, Asp1561, and Ser1622. The Helicase ATP-binding domain maps to 1669-1825 (PTMLKKGMTT…HSNGEIEDVQ (157 aa)). The important for RNA-binding stretch occupies residues 1673-1676 (KKGM). ATP is bound at residue 1682–1689 (FHPGAGKT). A DEAH box motif is present at residues 1773 to 1776 (DEAH). Positions 1820–1997 (EIEDVQTDIP…VRGGMVAPLY (178 aa)) constitute a Helicase C-terminal domain. Residue Lys1877 is modified to N6-acetyllysine; by host. The chain crosses the membrane as a helical span at residues 2158–2178 (MTIVMLFILAGLLTSGMVIFF). Residues 2179 to 2186 (MSPKGISR) are Lumenal-facing. Residues 2187–2207 (MSMAMGTMAGCGYLMFLGGVK) constitute an intramembrane region (helical). The Lumenal segment spans residues 2208-2209 (PT). A helical membrane pass occupies residues 2210 to 2230 (HISYVMLIFFVLMVVVIPEPG). Topologically, residues 2231-2241 (QQRSIQDNQVA) are cytoplasmic. Residues 2242–2262 (YLIIGILTLVSAVAANELGML) form a helical membrane-spanning segment. The Lumenal portion of the chain corresponds to 2263–2293 (EKTKEDLFGKKNLIPSSASPWSWPDLDLKPG). Residues 2294 to 2314 (AAWTVYVGIVTMLSPMLHHWI) constitute an intramembrane region (helical). Over 2315-2360 (KVEYGNLSLSGIAQSASVLSFMDKGIPFMKMNISVIMLLVSGWNSI) the chain is Lumenal. Residues 2361–2381 (TVMPLLCGIGCAMLHWSLILP) traverse the membrane as a helical segment. The Cytoplasmic portion of the chain corresponds to 2382–2421 (GIKAQQSKLAQRRVFHGVAENPVVDGNPTVDIEEAPEMPA). Residues 2422 to 2442 (LYEKKLALYLLLALSLASVAM) form a helical membrane-spanning segment. Topologically, residues 2443–2445 (CRT) are lumenal. The chain crosses the membrane as a helical span at residues 2446 to 2466 (PFSLAEGIVLASAALGPLIEG). Over 2467–3411 (NTSLLWNGPM…DADLQLGELI (945 aa)) the chain is Cytoplasmic. Residues 2507 to 2771 (GSANGKTLGE…DVILPIGTRS (265 aa)) form the mRNA cap 0-1 NS5-type MT domain. An S-adenosyl-L-methionine-binding site is contributed by Ser2562. Ser2562 is modified (phosphoserine). The For 2'-O-MTase activity role is filled by Lys2567. The S-adenosyl-L-methionine site is built by Gly2592, Trp2593, Thr2610, Leu2611, Asp2637, and Ile2638. Catalysis depends on Asp2652, which acts as the For 2'-O-MTase activity. Ile2653 contributes to the S-adenosyl-L-methionine binding site. Residues Lys2688 and Glu2724 each act as for 2'-O-MTase activity in the active site. Tyr2726 serves as a coordination point for S-adenosyl-L-methionine. The Nuclear localization signal motif lies at 2878-2911 (RKIMKVVNRWLFRHLAREKNPRLCTKEEFIAKVR). Glu2945, His2949, Cys2954, and Cys2957 together coordinate Zn(2+). Residues 3035–3187 (GGFYADDTAG…RPIDDRFGLA (153 aa)) form the RdRp catalytic domain. Zn(2+)-binding residues include His3222, Cys3238, and Cys3357.

This sequence in the N-terminal section; belongs to the class I-like SAM-binding methyltransferase superfamily. mRNA cap 0-1 NS5-type methyltransferase family. In terms of assembly, homodimer. Interacts (via N-terminus) with host EXOC1 (via C-terminus); this interaction results in EXOC1 degradation through the proteasome degradation pathway. Forms heterodimers with envelope protein E in the endoplasmic reticulum and Golgi. As to quaternary structure, homodimer; in the endoplasmic reticulum and Golgi. Interacts with protein prM. Interacts with non-structural protein 1. In terms of assembly, homodimer; Homohexamer when secreted. Interacts with envelope protein E. Interacts (via N-terminus) with serine protease NS3. As to quaternary structure, forms a heterodimer with serine protease NS3. May form homooligomers. In terms of assembly, forms a heterodimer with NS2B. Interacts with non-structural protein 2A (via N-terminus). Interacts with NS4B. Interacts with unphosphorylated RNA-directed RNA polymerase NS5; this interaction stimulates RNA-directed RNA polymerase NS5 guanylyltransferase activity. NS3 interacts with host PDCD6IP; this interaction contributes to virion release. Interacts with serine protease NS3. As to quaternary structure, homodimer. Interacts with host STAT2; this interaction prevents the establishment of cellular antiviral state. Interacts with serine protease NS3. Interacts with host TRIM23; this interaction leads to NS5 ubiquitination. Post-translationally, specific enzymatic cleavages in vivo yield mature proteins. The nascent capsid protein C contains a C-terminal hydrophobic domain that act as a signal sequence for translocation of prM into the lumen of the ER. Mature capsid protein C is cleaved at a site upstream of this hydrophobic domain by NS3. prM is cleaved in post-Golgi vesicles by a host furin, releasing the mature small envelope protein M, and peptide pr. Non-structural protein 2A-alpha, a C-terminally truncated form of non-structural protein 2A, results from partial cleavage by NS3. Specific enzymatic cleavages in vivo yield mature proteins peptide 2K acts as a signal sequence and is removed from the N-terminus of NS4B by the host signal peptidase in the ER lumen. Signal cleavage at the 2K-4B site requires a prior NS3 protease-mediated cleavage at the 4A-2K site. Cleaved in post-Golgi vesicles by a host furin, releasing the mature small envelope protein M, and peptide pr. This cleavage is incomplete as up to 30% of viral particles still carry uncleaved prM. In terms of processing, N-glycosylated. Post-translationally, N-glycosylated. The excreted form is glycosylated and this is required for efficient secretion of the protein from infected cells. Polyubiquitinated; ubiquitination is probably mediated by host TRIM23 and is prerequisite for NS5-STAT2 interaction. NS5 is not ISGylated or sumoylated. In terms of processing, acetylated by host KAT5. Acetylation modulates NS3 RNA-binding and unwinding activities and plays an important positive role for viral replication. Post-translationally, phosphorylated on serines residues. This phosphorylation may trigger NS5 nuclear localization.

It localises to the virion. The protein resides in the host nucleus. The protein localises to the host cytoplasm. It is found in the host perinuclear region. Its subcellular location is the secreted. It localises to the virion membrane. The protein resides in the host endoplasmic reticulum membrane. It carries out the reaction Selective hydrolysis of -Xaa-Xaa-|-Yaa- bonds in which each of the Xaa can be either Arg or Lys and Yaa can be either Ser or Ala.. The catalysed reaction is RNA(n) + a ribonucleoside 5'-triphosphate = RNA(n+1) + diphosphate. The enzyme catalyses a ribonucleoside 5'-triphosphate + H2O = a ribonucleoside 5'-diphosphate + phosphate + H(+). It catalyses the reaction ATP + H2O = ADP + phosphate + H(+). It carries out the reaction a 5'-end (5'-triphosphoguanosine)-ribonucleoside in mRNA + S-adenosyl-L-methionine = a 5'-end (N(7)-methyl 5'-triphosphoguanosine)-ribonucleoside in mRNA + S-adenosyl-L-homocysteine. The catalysed reaction is a 5'-end (N(7)-methyl 5'-triphosphoguanosine)-ribonucleoside in mRNA + S-adenosyl-L-methionine = a 5'-end (N(7)-methyl 5'-triphosphoguanosine)-(2'-O-methyl-ribonucleoside) in mRNA + S-adenosyl-L-homocysteine + H(+). Its function is as follows. Plays a role in virus budding by binding to the cell membrane and gathering the viral RNA into a nucleocapsid that forms the core of a mature virus particle. During virus entry, may induce genome penetration into the host cytoplasm after hemifusion induced by the surface proteins. Can migrate to the cell nucleus where it modulates host functions. Functionally, inhibits RNA silencing by interfering with host Dicer. Prevents premature fusion activity of envelope proteins in trans-Golgi by binding to envelope protein E at pH6.0. After virion release in extracellular space, gets dissociated from E dimers. In terms of biological role, acts as a chaperone for envelope protein E during intracellular virion assembly by masking and inactivating envelope protein E fusion peptide. prM is the only viral peptide matured by host furin in the trans-Golgi network probably to avoid catastrophic activation of the viral fusion activity in acidic Golgi compartment prior to virion release. prM-E cleavage is inefficient, and many virions are only partially matured. These uncleaved prM would play a role in immune evasion. Its function is as follows. May play a role in virus budding. Exerts cytotoxic effects by activating a mitochondrial apoptotic pathway through M ectodomain. May display a viroporin activity. Functionally, binds to host cell surface receptor and mediates fusion between viral and cellular membranes. Envelope protein is synthesized in the endoplasmic reticulum in the form of heterodimer with protein prM. They play a role in virion budding in the ER, and the newly formed immature particle is covered with 60 spikes composed of heterodimer between precursor prM and envelope protein E. The virion is transported to the Golgi apparatus where the low pH causes dissociation of PrM-E heterodimers and formation of E homodimers. prM-E cleavage is inefficient, and many virions are only partially matured. These uncleaved prM would play a role in immune evasion. Involved in immune evasion, pathogenesis and viral replication. Once cleaved off the polyprotein, is targeted to three destinations: the viral replication cycle, the plasma membrane and the extracellular compartment. Essential for viral replication. Required for formation of the replication complex and recruitment of other non-structural proteins to the ER-derived membrane structures. Excreted as a hexameric lipoparticle that plays a role against host immune response. Antagonizing the complement function. Binds to the host macrophages and dendritic cells. Inhibits signal transduction originating from Toll-like receptor 3 (TLR3). In terms of biological role, component of the viral RNA replication complex that functions in virion assembly and antagonizes the host immune response. Its function is as follows. Required cofactor for the serine protease function of NS3. May have membrane-destabilizing activity and form viroporins. Functionally, displays three enzymatic activities: serine protease, NTPase and RNA helicase. NS3 serine protease, in association with NS2B, performs its autocleavage and cleaves the polyprotein at dibasic sites in the cytoplasm: C-prM, NS2A-NS2B, NS2B-NS3, NS3-NS4A, NS4A-2K and NS4B-NS5. NS3 RNA helicase binds RNA and unwinds dsRNA in the 3' to 5' direction. Also plays a role in virus assembly. Regulates the ATPase activity of the NS3 helicase activity. NS4A allows NS3 helicase to conserve energy during unwinding. In terms of biological role, functions as a signal peptide for NS4B and is required for the interferon antagonism activity of the latter. Its function is as follows. Induces the formation of ER-derived membrane vesicles where the viral replication takes place. Inhibits interferon (IFN)-induced host STAT1 phosphorylation and nuclear translocation, thereby preventing the establishment of cellular antiviral state by blocking the IFN-alpha/beta pathway. Functionally, replicates the viral (+) and (-) RNA genome, and performs the capping of genomes in the cytoplasm. NS5 methylates viral RNA cap at guanine N-7 and ribose 2'-O positions. Besides its role in RNA genome replication, also prevents the establishment of cellular antiviral state by blocking the interferon-alpha/beta (IFN-alpha/beta) signaling pathway. IFN-I induces binding of NS5 to host IFN-activated transcription factor STAT2, preventing its transcriptional activity. Host TRIM23 is the E3 ligase that interacts with and polyubiquitinates NS5 to promote its binding to STAT2 and trigger IFN-I signaling inhibition. The protein is Genome polyprotein of Aedes aegypti (Yellowfever mosquito).